Here is a 588-residue protein sequence, read N- to C-terminus: uncharacterized protein (588 aa).

The next 7 membrane-spanning stretches (helical) occupy residues 14–34, 49–69, 78–98, 184–204, 235–255, 257–274, and 275–292; these read FLLF…KGIV, AVIL…IVSA, IFLC…GILG, ALVV…LVAI, VPIA…AVIG, VISS…SYQE, and SSFY…SIYD. Ser486 carries the phosphoserine modification. The disordered stretch occupies residues 566–588; it reads RKGSVNGSDQESQKGVSRNVDIV. A compositionally biased stretch (polar residues) spans 570–581; that stretch reads VNGSDQESQKGV.

The protein localises to the membrane. This is an uncharacterized protein from Arabidopsis thaliana (Mouse-ear cress).